Here is a 299-residue protein sequence, read N- to C-terminus: HTH-type transcriptional regulator ArgP (299 aa).

Residues 4–60 (PDYRALQALDAVIRERGFERAAQKLCITQSAVSQRIKQLENLFGQPLLVRTVPPQPT) form the HTH lysR-type domain. A DNA-binding region (H-T-H motif) is located at residues 21 to 40 (FERAAQKLCITQSAVSQRIK).

It belongs to the LysR transcriptional regulatory family. As to quaternary structure, homodimer.

Functionally, controls the transcription of genes involved in arginine and lysine metabolism. The protein is HTH-type transcriptional regulator ArgP of Proteus mirabilis (strain HI4320).